A 147-amino-acid chain; its full sequence is Large ribosomal subunit protein bL9 (147 aa).

The protein belongs to the bacterial ribosomal protein bL9 family.

Functionally, binds to the 23S rRNA. The sequence is that of Large ribosomal subunit protein bL9 from Flavobacterium psychrophilum (strain ATCC 49511 / DSM 21280 / CIP 103535 / JIP02/86).